Reading from the N-terminus, the 521-residue chain is Citrinin biosynthesis cluster MFS transporter ctnC (521 aa).

The interval 1–29 is disordered; the sequence is MKEEIDAPVSTDASGTDLENARDQPSGEK. Transmembrane regions (helical) follow at residues 58 to 78, 95 to 115, 124 to 144, 155 to 175, 182 to 202, 237 to 257, 313 to 333, and 349 to 369; these read SLITCIFSTLTIWVTFSSSVF, VMTLGTSLTVLGFTVGPLVWG, LKPLYIGYAIFIIFQVPVAVA, FFLGFFGTSALAIIPGALADF, AIAISLFSAATFVGPIFGPIM, WTAWITMIPASFFGIIAFLTL, ILVCMTIYISLIYGILYLFFV, and GIAALPFLGILVGVLMGCLLV. N383 carries an N-linked (GlcNAc...) asparagine glycan. The next 4 membrane-spanning stretches (helical) occupy residues 392-412, 417-437, 465-485, and 489-509; these read LPPMIVAAILLPIGLFWFGWT, ISWAPQAIAGAPIGMGILMIW, AVSAAFPLFATAMYHKLGVDW, and LLGFLSIAMIPIPVIFYFYGA.

Belongs to the major facilitator superfamily. CAR1 family.

Its subcellular location is the membrane. MFS transporter; part of the gene cluster that mediates the biosynthesis the mycotoxin citrinin, a hepato-nephrotoxic compound to humans due to inhibition of respiration complex III. The sequence is that of Citrinin biosynthesis cluster MFS transporter ctnC (ctnC) from Monascus purpureus (Red mold).